The sequence spans 740 residues: Catalase-peroxidase (740 aa).

A disordered region spans residues 1–32 (MPEDRPIEDSPPIGEAQTDAPAGGCPAGFGRI). The segment at residues 113-237 (WHAAGTYRVS…LAAVQMGLIY (125 aa)) is a cross-link (tryptophyl-tyrosyl-methioninium (Trp-Tyr) (with M-263)). The active-site Proton acceptor is the His114. A cross-link (tryptophyl-tyrosyl-methioninium (Tyr-Met) (with W-113)) is located at residues 237–263 (YVNPEGPNGNPDPQASAIDIRETFGRM). His278 contacts heme b.

Belongs to the peroxidase family. Peroxidase/catalase subfamily. Homodimer or homotetramer. It depends on heme b as a cofactor. Formation of the three residue Trp-Tyr-Met cross-link is important for the catalase, but not the peroxidase activity of the enzyme.

The catalysed reaction is H2O2 + AH2 = A + 2 H2O. The enzyme catalyses 2 H2O2 = O2 + 2 H2O. In terms of biological role, bifunctional enzyme with both catalase and broad-spectrum peroxidase activity. May play a role in the intracellular survival of mycobacteria. The sequence is that of Catalase-peroxidase from Mycolicibacterium smegmatis (Mycobacterium smegmatis).